The sequence spans 336 residues: Glycerol-3-phosphate dehydrogenase [NAD(P)+] (336 aa).

S16, Y17, H37, and K111 together coordinate NADPH. Residues K111, G140, and T142 each contribute to the sn-glycerol 3-phosphate site. NADPH is bound at residue A144. Positions 196, 249, 259, 260, and 261 each coordinate sn-glycerol 3-phosphate. K196 serves as the catalytic Proton acceptor. R260 lines the NADPH pocket. NADPH contacts are provided by V284 and E286.

This sequence belongs to the NAD-dependent glycerol-3-phosphate dehydrogenase family.

The protein resides in the cytoplasm. The catalysed reaction is sn-glycerol 3-phosphate + NAD(+) = dihydroxyacetone phosphate + NADH + H(+). It catalyses the reaction sn-glycerol 3-phosphate + NADP(+) = dihydroxyacetone phosphate + NADPH + H(+). The protein operates within membrane lipid metabolism; glycerophospholipid metabolism. Functionally, catalyzes the reduction of the glycolytic intermediate dihydroxyacetone phosphate (DHAP) to sn-glycerol 3-phosphate (G3P), the key precursor for phospholipid synthesis. This Glaesserella parasuis serovar 5 (strain SH0165) (Haemophilus parasuis) protein is Glycerol-3-phosphate dehydrogenase [NAD(P)+].